A 149-amino-acid polypeptide reads, in one-letter code: 3-hydroxyacyl-[acyl-carrier-protein] dehydratase FabZ (149 aa).

Residue H53 is part of the active site.

This sequence belongs to the thioester dehydratase family. FabZ subfamily.

The protein localises to the cytoplasm. The enzyme catalyses a (3R)-hydroxyacyl-[ACP] = a (2E)-enoyl-[ACP] + H2O. Its function is as follows. Involved in unsaturated fatty acids biosynthesis. Catalyzes the dehydration of short chain beta-hydroxyacyl-ACPs and long chain saturated and unsaturated beta-hydroxyacyl-ACPs. The sequence is that of 3-hydroxyacyl-[acyl-carrier-protein] dehydratase FabZ from Polynucleobacter asymbioticus (strain DSM 18221 / CIP 109841 / QLW-P1DMWA-1) (Polynucleobacter necessarius subsp. asymbioticus).